We begin with the raw amino-acid sequence, 79 residues long: Short neurotoxin 2 (79 aa).

Residues 1-21 (MKTLLLTLVMVTIMCLDLGYT) form the signal peptide. 4 cysteine pairs are disulfide-bonded: C24/C41, C34/C59, C63/C71, and C72/C77.

Belongs to the three-finger toxin family. Short-chain subfamily. Type III alpha-neurotoxin sub-subfamily. In terms of tissue distribution, expressed by the venom gland.

It is found in the secreted. Its function is as follows. Binds with high affinity to muscle nicotinic acetylcholine receptor (nAChR) and hinders acetylcholine binding to the receptor, thereby impairing neuromuscular transmission. Competes with the binding of alpha-bungarotoxin on muscle AChR (from Torpedo) with an IC(50) of 0.30 uM. Causes muscle paralysis, spasms and increased respiration. The polypeptide is Short neurotoxin 2 (Pseudonaja textilis (Eastern brown snake)).